The primary structure comprises 320 residues: MIYNNISLNTITTTPLTYRDRITFEFSVHGTCVVFNLFLCIFFICRPHLLRTFKPTIFFVTLGTFVLSLPLFFLQFYLVVFLWSLVEPRYTIAVCTLVKCITSSTTSCAQVLPLAVAIYRYFIVVRNKKMPSWFVVVVHSIISFIFFVIAILNFPLGEFETNDQCAVLRFSKAMEAVRISLTLGLNLFAVFINVAIYTFVKKYDKRNVDVHRRRVQLTYSMLLQSMIPILVSIPLLVGSFDFYFGYTLPSGFTSRWYATTFLSPLLTPISSMLSLRTIRHELLSIILSSFLFTGTRKISNLVTKTSKTNVAPHSSDYSSA.

Helical transmembrane passes span 24–44, 65–85, 105–125, 132–152, 179–199, 226–246, and 253–275; these read FEFS…IFFI, FVLS…LWSL, TTSC…FIVV, SWFV…IAIL, ISLT…IYTF, MIPI…YFGY, and TSRW…MLSL.

It localises to the membrane. This is an uncharacterized protein from Caenorhabditis elegans.